Reading from the N-terminus, the 524-residue chain is Phenylalanine--tRNA ligase alpha subunit (524 aa).

3 residues coordinate L-phenylalanine: T362, Y441, and F467.

It belongs to the class-II aminoacyl-tRNA synthetase family. Phe-tRNA synthetase alpha subunit type 2 subfamily. As to quaternary structure, tetramer of two alpha and two beta subunits. Requires Mg(2+) as cofactor.

It is found in the cytoplasm. The enzyme catalyses tRNA(Phe) + L-phenylalanine + ATP = L-phenylalanyl-tRNA(Phe) + AMP + diphosphate + H(+). The polypeptide is Phenylalanine--tRNA ligase alpha subunit (Methanopyrus kandleri (strain AV19 / DSM 6324 / JCM 9639 / NBRC 100938)).